A 619-amino-acid chain; its full sequence is ATP-dependent zinc metalloprotease FtsH (619 aa).

Residues 1–11 (MDKQSKFRIKT) lie on the Cytoplasmic side of the membrane. Residues 12 to 32 (FFKKIIFFLIIFCFFYFFNFI) traverse the membrane as a helical segment. Residues 33–131 (KKTKKITHTT…FKNYKIYTVL (99 aa)) lie on the Periplasmic side of the membrane. Residues 132–152 (NFFYDYGFFLMIIIICWIFIF) traverse the membrane as a helical segment. Residues 153 to 619 (RKIASRSSES…FKEDFASILD (467 aa)) are Cytoplasmic-facing. 224-231 (GPPGTGKT) lines the ATP pocket. Histidine 447 is a Zn(2+) binding site. Glutamate 448 is an active-site residue. Zn(2+) is bound by residues histidine 451 and aspartate 522.

In the central section; belongs to the AAA ATPase family. The protein in the C-terminal section; belongs to the peptidase M41 family. As to quaternary structure, homohexamer. Zn(2+) is required as a cofactor.

It is found in the cell inner membrane. Its function is as follows. Acts as a processive, ATP-dependent zinc metallopeptidase for both cytoplasmic and membrane proteins. Plays a role in the quality control of integral membrane proteins. In Karelsulcia muelleri (strain DMIN) (Sulcia muelleri), this protein is ATP-dependent zinc metalloprotease FtsH.